Consider the following 114-residue polypeptide: Kininogen-2 (114 aa).

Positions 1 to 23 (MRLWFCLSFFIVLCLEHFPGTLA) are cleaved as a signal peptide. The segment covering 35 to 45 (TRLHGHHKPSR) has biased composition (basic residues). A disordered region spans residues 35-114 (TRLHGHHKPS…QIPGLGPLRG (80 aa)). The segment covering 65–80 (PESEEKTEQFLRDLPK) has biased composition (basic and acidic residues). Arg-113 is subject to Arginine amide.

The protein belongs to the bradykinin-related peptide family. As to expression, expressed by the skin glands.

The protein localises to the secreted. Potent vasodilator. Binds B1 (BDKRB1) and B2 (BDKRB2) bradykinin receptors. This chain is Kininogen-2, found in Bombina maxima (Giant fire-bellied toad).